We begin with the raw amino-acid sequence, 188 residues long: MKKIGVLAIQGAVDEHIQMIESAGALAFKVKHSSDLDGLDGLVLPGGESTTMRKIMKRYDLMEPIRAFASEGKAIFGTCAGLVLLSKEIEGGEESLGLIEATAIRNGFGRQKESFEAELNIEAFGEPAFEAIFIRAPYLIEPSNEVAVLATVENRIVAAKQANILVTAFHPELTNDNRWMNYFLEKMV.

47-49 (GES) contacts L-glutamine. The active-site Nucleophile is Cys79. L-glutamine is bound by residues Arg105 and 134-135 (IR). Catalysis depends on charge relay system residues His170 and Glu172.

The protein belongs to the glutaminase PdxT/SNO family. As to quaternary structure, in the presence of PdxS, forms a dodecamer of heterodimers. Only shows activity in the heterodimer.

The catalysed reaction is aldehydo-D-ribose 5-phosphate + D-glyceraldehyde 3-phosphate + L-glutamine = pyridoxal 5'-phosphate + L-glutamate + phosphate + 3 H2O + H(+). The enzyme catalyses L-glutamine + H2O = L-glutamate + NH4(+). It functions in the pathway cofactor biosynthesis; pyridoxal 5'-phosphate biosynthesis. In terms of biological role, catalyzes the hydrolysis of glutamine to glutamate and ammonia as part of the biosynthesis of pyridoxal 5'-phosphate. The resulting ammonia molecule is channeled to the active site of PdxS. The polypeptide is Pyridoxal 5'-phosphate synthase subunit PdxT (Listeria monocytogenes serotype 4b (strain CLIP80459)).